Consider the following 150-residue polypeptide: Cytochrome c oxidase subunit 5A, mitochondrial (150 aa).

The transit peptide at Met1 to Tyr41 directs the protein to the mitochondrion. An SIFI-degron motif is present at residues Leu2 to Ala17. N6-acetyllysine is present on residues Lys87 and Lys113. Phosphothreonine is present on Thr141.

This sequence belongs to the cytochrome c oxidase subunit 5A family. Component of the cytochrome c oxidase (complex IV, CIV), a multisubunit enzyme composed of 14 subunits. The complex is composed of a catalytic core of 3 subunits MT-CO1, MT-CO2 and MT-CO3, encoded in the mitochondrial DNA, and 11 supernumerary subunits COX4I, COX5A, COX5B, COX6A, COX6B, COX6C, COX7A, COX7B, COX7C, COX8 and NDUFA4, which are encoded in the nuclear genome. The complex exists as a monomer or a dimer and forms supercomplexes (SCs) in the inner mitochondrial membrane with NADH-ubiquinone oxidoreductase (complex I, CI) and ubiquinol-cytochrome c oxidoreductase (cytochrome b-c1 complex, complex III, CIII), resulting in different assemblies (supercomplex SCI(1)III(2)IV(1) and megacomplex MCI(2)III(2)IV(2)). Interacts with AFG1L. Interacts with RAB5IF. In response to mitochondrial stress, the precursor protein is ubiquitinated by the SIFI complex in the cytoplasm before mitochondrial import, leading to its degradation. Within the SIFI complex, UBR4 initiates ubiquitin chain that are further elongated or branched by KCMF1.

It is found in the mitochondrion inner membrane. Its pathway is energy metabolism; oxidative phosphorylation. Its function is as follows. Component of the cytochrome c oxidase, the last enzyme in the mitochondrial electron transport chain which drives oxidative phosphorylation. The respiratory chain contains 3 multisubunit complexes succinate dehydrogenase (complex II, CII), ubiquinol-cytochrome c oxidoreductase (cytochrome b-c1 complex, complex III, CIII) and cytochrome c oxidase (complex IV, CIV), that cooperate to transfer electrons derived from NADH and succinate to molecular oxygen, creating an electrochemical gradient over the inner membrane that drives transmembrane transport and the ATP synthase. Cytochrome c oxidase is the component of the respiratory chain that catalyzes the reduction of oxygen to water. Electrons originating from reduced cytochrome c in the intermembrane space (IMS) are transferred via the dinuclear copper A center (CU(A)) of subunit 2 and heme A of subunit 1 to the active site in subunit 1, a binuclear center (BNC) formed by heme A3 and copper B (CU(B)). The BNC reduces molecular oxygen to 2 water molecules using 4 electrons from cytochrome c in the IMS and 4 protons from the mitochondrial matrix. This is Cytochrome c oxidase subunit 5A, mitochondrial (COX5A) from Gorilla gorilla gorilla (Western lowland gorilla).